A 141-amino-acid chain; its full sequence is HTH-type transcriptional regulator LrpA (141 aa).

The HTH asnC-type domain maps to 2 to 63; the sequence is VDERDKIILD…KINPKKLGYS (62 aa). Positions 21–40 form a DNA-binding region, H-T-H motif; that stretch reads FTEIAKILGISETAVRKRVK.

As to quaternary structure, homooctamer; tetramer of dimers.

DNA-binding protein that negatively regulates its own transcription. Interferes with RNA polymerase (RNAP) recruitment by inhibiting the association of RNAP with the TBP-TFB promoter complex. The chain is HTH-type transcriptional regulator LrpA (lrpA) from Pyrococcus abyssi (strain GE5 / Orsay).